The chain runs to 200 residues: Coiled-coil domain-containing protein 28B (200 aa).

M1 is subject to N-acetylmethionine. Over residues 1–10 (MEDKKKKRSP) the composition is skewed to basic residues. Positions 1-49 (MEDKKKKRSPKPCLTQPAQAPGTLRRVPVPTSHSGSLALGLPHLPSPKQ) are disordered. 2 positions are modified to phosphoserine: S46 and S115. Residues 140-152 (GEEEDEEEEEDGV) show a composition bias toward acidic residues. The tract at residues 140–165 (GEEEDEEEEEDGVTEGLPEEQKKTMA) is disordered. Positions 158-189 (EEQKKTMADRNLDQLLSNLEDLSNSIQKLHLA) form a coiled coil.

As to quaternary structure, interacts with BBS1, BBS2, BBS4, BBS5, BBS6, BBS7 and TTC8/BBS8. Interacts with MAPKAP1/SIN1 isoform 1 and RICTOR. In terms of tissue distribution, expressed in the retina, pericardium and limb epithelium.

The protein localises to the cytoplasm. It is found in the cytoskeleton. It localises to the microtubule organizing center. The protein resides in the centrosome. Functionally, involved in ciliogenesis. Regulates cilia length through its interaction with MAPKAP1/SIN1 but independently of mTORC2 complex. Modulates mTORC2 complex assembly and function, possibly enhances AKT1 phosphorylation. Does not seem to modulate assembly and function of mTORC1 complex. The sequence is that of Coiled-coil domain-containing protein 28B (Ccdc28b) from Mus musculus (Mouse).